The sequence spans 557 residues: CCR4-NOT transcription complex subunit 6 (557 aa).

4 LRR repeats span residues 52 to 73 (HLTA…IAKL), 75 to 96 (NLVY…LGNM), 98 to 120 (SLRE…GKLF), and 121 to 143 (QLQT…CLEP). A nuclease domain region spans residues 153-557 (LLDNLSGTAK…VNGIHLPGRR (405 aa)). Position 240 (Glu240) interacts with Mg(2+). Positions 240, 276, 361, and 366 each coordinate substrate. Asp412 provides a ligand contact to Mg(2+). Asp412 serves as the catalytic Proton donor/acceptor. Positions 414, 481, and 486 each coordinate substrate.

Belongs to the CCR4/nocturin family. In terms of assembly, component of the CCR4-NOT complex; distinct complexes seem to exist that differ in the participation of probably mutually exclusive catalytic subunits; the complex contains two deadenylase subunits, CNOT6 or CNOT6L, and CNOT7 or CNOT8. Interacts with CNOT7 and CNOT8. Interacts with UNR. Interacts with ZFP36L1 (via N-terminus). Interacts with ZNF335. Mg(2+) is required as a cofactor.

The protein localises to the cytoplasm. It localises to the nucleus. The enzyme catalyses Exonucleolytic cleavage of poly(A) to 5'-AMP.. Functionally, poly(A) nuclease with 3'-5' RNase activity. Catalytic component of the CCR4-NOT complex which is one of the major cellular mRNA deadenylases and is linked to various cellular processes including bulk mRNA degradation, miRNA-mediated repression, translational repression during translational initiation and general transcription regulation. Additional complex functions may be a consequence of its influence on mRNA expression. Involved in mRNA decay mediated by the major-protein-coding determinant of instability (mCRD) of the FOS gene in the cytoplasm. In the presence of ZNF335, enhances ligand-dependent transcriptional activity of nuclear hormone receptors. Mediates cell proliferation and cell survival and prevents cellular senescence. The protein is CCR4-NOT transcription complex subunit 6 (Cnot6) of Mus musculus (Mouse).